The primary structure comprises 440 residues: Chromosomal replication initiator protein DnaA (440 aa).

The tract at residues 1 to 74 (MNPSQILENL…VQSGNKAIIN (74 aa)) is domain I, interacts with DnaA modulators. Residues 74-99 (NIQAQSAKQSNKSTKIDIAHIKAQST) are domain II. Residues 100–316 (ILNPSFTFDS…GIIISLNAYA (217 aa)) are domain III, AAA+ region. ATP contacts are provided by Gly146, Gly148, Lys149, and Thr150. Residues 317–440 (TILGQEITLE…KNKILVKSQS (124 aa)) form a domain IV, binds dsDNA region.

This sequence belongs to the DnaA family. As to quaternary structure, oligomerizes as a right-handed, spiral filament on DNA at oriC.

Its subcellular location is the cytoplasm. In terms of biological role, plays an essential role in the initiation and regulation of chromosomal replication. ATP-DnaA binds to the origin of replication (oriC) to initiate formation of the DNA replication initiation complex once per cell cycle. Binds the DnaA box (a 9 base pair repeat at the origin) and separates the double-stranded (ds)DNA. Forms a right-handed helical filament on oriC DNA; dsDNA binds to the exterior of the filament while single-stranded (ss)DNA is stabiized in the filament's interior. The ATP-DnaA-oriC complex binds and stabilizes one strand of the AT-rich DNA unwinding element (DUE), permitting loading of DNA polymerase. After initiation quickly degrades to an ADP-DnaA complex that is not apt for DNA replication. Binds acidic phospholipids. This is Chromosomal replication initiator protein DnaA from Campylobacter jejuni subsp. jejuni serotype O:23/36 (strain 81-176).